The primary structure comprises 984 residues: Translation initiation factor IF-2 (984 aa).

2 disordered regions span residues 92–267 and 280–392; these read KKRT…ERRR and MNAP…EEHV. Over residues 104–123 the composition is skewed to low complexity; it reads PATPEVQPVAEAPAAAPAAP. Over residues 124–177 the composition is skewed to basic and acidic residues; that stretch reads RIDEAELARREEEARRQAELIRRQEEELAEKRRLREEAEAREREQAEKAERAEQ. Low complexity predominate over residues 193-235; that stretch reads DAAAAAPAKEAAKPAAAPVAAAAAAAEQQAADTKLAAQTAATQ. Basic and acidic residues-rich tracts occupy residues 236 to 267 and 291 to 302; these read AKED…ERRR and KAPEKPQPEKAA. Over residues 310–335 the composition is skewed to low complexity; it reads PAAPAARPGAPAAPGAAAAPGAAGAG. Residues 351-361 show a composition bias toward basic and acidic residues; it reads PAKKKEIKTRG. The segment covering 363–375 has biased composition (gly residues); the sequence is ASGGVGRGNWRGG. A compositionally biased stretch (basic and acidic residues) spans 381-392; it reads GSNDRGGHEEHV. The tr-type G domain occupies 484 to 653; the sequence is PRAPVVTVMG…LLQAEVLELK (170 aa). The tract at residues 493 to 500 is G1; it reads GHVDHGKT. 493-500 is a binding site for GTP; that stretch reads GHVDHGKT. The G2 stretch occupies residues 518 to 522; the sequence is GITQH. The tract at residues 539-542 is G3; it reads DTPG. GTP is bound by residues 539 to 543 and 593 to 596; these read DTPGH and NKID. The G4 stretch occupies residues 593-596; sequence NKID. Residues 629–631 form a G5 region; the sequence is SAK.

This sequence belongs to the TRAFAC class translation factor GTPase superfamily. Classic translation factor GTPase family. IF-2 subfamily.

The protein resides in the cytoplasm. Functionally, one of the essential components for the initiation of protein synthesis. Protects formylmethionyl-tRNA from spontaneous hydrolysis and promotes its binding to the 30S ribosomal subunits. Also involved in the hydrolysis of GTP during the formation of the 70S ribosomal complex. The protein is Translation initiation factor IF-2 of Variovorax paradoxus (strain S110).